The sequence spans 219 residues: Cell division protein B2 (219 aa).

In terms of biological role, part of a cell division machinery. This Sulfolobus acidocaldarius (strain ATCC 33909 / DSM 639 / JCM 8929 / NBRC 15157 / NCIMB 11770) protein is Cell division protein B2.